The sequence spans 299 residues: GTPase Era (299 aa).

The 168-residue stretch at 4-171 folds into the Era-type G domain; that stretch reads KSGFVAILGR…VDILSENLGE (168 aa). A G1 region spans residues 12–19; sequence GRPNVGKS. A GTP-binding site is contributed by 12 to 19; it reads GRPNVGKS. A G2 region spans residues 38–42; the sequence is QTTRN. Positions 59 to 62 are G3; the sequence is DTPG. GTP-binding positions include 59 to 63 and 121 to 124; these read DTPGI and NKID. Positions 121–124 are G4; it reads NKID. Residues 150 to 152 form a G5 region; sequence ISA. Positions 202–280 constitute a KH type-2 domain; it reads TREEIPHSVA…FLETWVKVKK (79 aa).

Belongs to the TRAFAC class TrmE-Era-EngA-EngB-Septin-like GTPase superfamily. Era GTPase family. As to quaternary structure, monomer.

It is found in the cytoplasm. The protein resides in the cell membrane. An essential GTPase that binds both GDP and GTP, with rapid nucleotide exchange. Plays a role in 16S rRNA processing and 30S ribosomal subunit biogenesis and possibly also in cell cycle regulation and energy metabolism. The protein is GTPase Era of Streptococcus pneumoniae (strain JJA).